We begin with the raw amino-acid sequence, 120 residues long: Putative membrane protein insertion efficiency factor (120 aa).

The interval 93–120 (GRSCQTDVDGANDDWNPASKRGERESFV) is disordered.

Belongs to the UPF0161 family.

It is found in the cell membrane. Could be involved in insertion of integral membrane proteins into the membrane. This is Putative membrane protein insertion efficiency factor from Mycobacterium bovis (strain ATCC BAA-935 / AF2122/97).